The sequence spans 180 residues: Prorelaxin (180 aa).

The first 25 residues, 1 to 25 (MLRLFLSHLLGVWLLLSLRARKIPA), serve as a signal peptide directing secretion. Disulfide bonds link C33–C167, C45–C180, and C166–C171. The propeptide at 53-154 (SSQQHREPRQ…RSRLDAHSRI (102 aa)) is connecting peptide.

The protein belongs to the insulin family. As to quaternary structure, heterodimer of a B chain and an A chain linked by two disulfide bonds. Expressed by the placenta. Exclusively detected in cells located in the lamellar placental labyrinth and absent from other placental and non-placental uterine parts.

The protein resides in the secreted. Functionally, relaxin is an ovarian hormone that acts with estrogen to produce dilatation of the birth canal in many mammals. The sequence is that of Prorelaxin (RLN) from Felis catus (Cat).